The sequence spans 434 residues: NADH-quinone oxidoreductase subunit F 1 (434 aa).

Position 54–63 (54–63 (GRGGAGFPTG)) interacts with NAD(+). 166–213 (GAGAYICGEETALLESLEGKKGQPRLKPPFPANMGLYGCPTTVNNVES) contributes to the FMN binding site. Residues Cys-345, Cys-348, Cys-351, and Cys-391 each coordinate [4Fe-4S] cluster.

This sequence belongs to the complex I 51 kDa subunit family. Requires FMN as cofactor. [4Fe-4S] cluster serves as cofactor.

The catalysed reaction is a quinone + NADH + 5 H(+)(in) = a quinol + NAD(+) + 4 H(+)(out). NDH-1 shuttles electrons from NADH, via FMN and iron-sulfur (Fe-S) centers, to quinones in the respiratory chain. The immediate electron acceptor for the enzyme in this species is believed to be ubiquinone. Couples the redox reaction to proton translocation (for every two electrons transferred, four hydrogen ions are translocated across the cytoplasmic membrane), and thus conserves the redox energy in a proton gradient. This Rhizobium meliloti (strain 1021) (Ensifer meliloti) protein is NADH-quinone oxidoreductase subunit F 1 (nuoF1).